Here is a 1600-residue protein sequence, read N- to C-terminus: A disintegrin and metalloproteinase with thrombospondin motifs 12 (1600 aa).

A signal peptide spans 1-25 (MPCARGSWLAKLSIVAQLINFGAFC). Residues 26-244 (HGRQTQPWPV…TLRSRSLSRR (219 aa)) constitute a propeptide that is removed on maturation. N-linked (GlcNAc...) asparagine glycosylation is present at N105. The Cysteine switch motif lies at 210–217 (PICGLKDS). C212 provides a ligand contact to Zn(2+). The Peptidase M12B domain maps to 250–460 (RWVETLVVAD…GRGFCLDDIP (211 aa)). Intrachain disulfides connect C326/C380, C355/C362, C374/C455, C413/C439, C482/C505, C493/C511, C500/C530, C524/C535, C558/C595, C562/C600, and C573/C585. H396 provides a ligand contact to Zn(2+). Residue E397 is part of the active site. Residues H400 and H406 each coordinate Zn(2+). The Disintegrin domain occupies 469–548 (VIAPGVIYDV…GKKPESIPGG (80 aa)). 4 consecutive TSP type-1 domains span residues 546 to 601 (PGGW…HPCR), 827 to 887 (KLLY…KDCP), 891 to 947 (WAGE…RDIL), and 948 to 1001 (CPSD…QQCP). The tract at residues 705 to 831 (CQTVKKLFRQ…DNDVEKLLYF (127 aa)) is spacer 1. Residues 1001-1321 (PFSRRVLKPN…HLMKDHSPAY (321 aa)) are spacer 2. Disordered stretches follow at residues 1006-1140 (VLKP…LSSS) and 1158-1179 (PEVE…KDKS). A compositionally biased stretch (low complexity) spans 1038 to 1047 (PTPLSTPTVP). Residues 1048–1107 (ESMSTSTPTINSLGSTIASQEDANGMGWQNNSTQAEEGSHFPTSSGSTSQVPVTSWSLSI) show a composition bias toward polar residues. Positions 1130-1140 (TTTSDSGLSSS) are enriched in low complexity. TSP type-1 domains are found at residues 1318-1371 (SPAY…RPCA), 1373-1428 (WRVG…CNLE), 1429-1477 (PCGE…NRHL), and 1478-1538 (CCHW…QACR). The PLAC domain occupies 1541–1581 (ADLTCLKDRLSISFCQTLKSMRKCSVPSVRAQCCLSCPQAP).

In terms of assembly, interacts with COMP. Requires Zn(2+) as cofactor. Post-translationally, the precursor is cleaved by a furin endopeptidase. Subjected to an intracellular maturation process yielding a 120 kDa N-terminal fragment containing the metalloproteinase, disintegrin, one TSP type-1 and the Cys-rich domains and a 83 kDa C-terminal fragment containing the spacer 2 and four TSP type-1 domains. In terms of processing, glycosylated. Can be O-fucosylated by POFUT2 on a serine or a threonine residue found within the consensus sequence C1-X(2)-(S/T)-C2-G of the TSP type-1 repeat domains where C1 and C2 are the first and second cysteine residue of the repeat, respectively. Fucosylated repeats can then be further glycosylated by the addition of a beta-1,3-glucose residue by the glucosyltransferase, B3GALTL. Fucosylation mediates the efficient secretion of ADAMTS family members. Can also be C-glycosylated with one or two mannose molecules on tryptophan residues within the consensus sequence W-X-X-W of the TPRs, and N-glycosylated. These other glycosylations can also facilitate secretion.

The protein resides in the secreted. It is found in the extracellular space. It localises to the extracellular matrix. Inhibited by alpha-2 macroglobulin. Metalloprotease that plays a role in the degradation of COMP. Also cleaves alpha-2 macroglobulin and aggregan. Has anti-tumorigenic properties. This is A disintegrin and metalloproteinase with thrombospondin motifs 12 (Adamts12) from Mus musculus (Mouse).